The primary structure comprises 311 residues: Pyrimidine-specific ribonucleoside hydrolase RihA (311 aa).

His-240 is an active-site residue.

Belongs to the IUNH family. RihA subfamily.

Its function is as follows. Hydrolyzes cytidine or uridine to ribose and cytosine or uracil, respectively. This Salmonella schwarzengrund (strain CVM19633) protein is Pyrimidine-specific ribonucleoside hydrolase RihA.